Here is a 598-residue protein sequence, read N- to C-terminus: UvrABC system protein C (598 aa).

In terms of domain architecture, GIY-YIG spans 14-91 (DQPGCYLMKD…IHKNNPKYNI (78 aa)). Positions 196-231 (TEIQDRLQEKMAYAAAHMEFEKAAEFRDQIKAIETV) constitute a UVR domain.

The protein belongs to the UvrC family. In terms of assembly, interacts with UvrB in an incision complex.

It is found in the cytoplasm. The UvrABC repair system catalyzes the recognition and processing of DNA lesions. UvrC both incises the 5' and 3' sides of the lesion. The N-terminal half is responsible for the 3' incision and the C-terminal half is responsible for the 5' incision. This chain is UvrABC system protein C, found in Enterococcus faecalis (strain ATCC 700802 / V583).